Here is a 328-residue protein sequence, read N- to C-terminus: tRNA uridine(34) hydroxylase (328 aa).

The Rhodanese domain occupies 130–224; the sequence is LDKDTVVLDT…YGKDPEVQGE (95 aa). Cys-184 (cysteine persulfide intermediate) is an active-site residue.

This sequence belongs to the TrhO family.

It carries out the reaction uridine(34) in tRNA + AH2 + O2 = 5-hydroxyuridine(34) in tRNA + A + H2O. Catalyzes oxygen-dependent 5-hydroxyuridine (ho5U) modification at position 34 in tRNAs. This Streptococcus pneumoniae serotype 19F (strain G54) protein is tRNA uridine(34) hydroxylase.